A 2167-amino-acid polypeptide reads, in one-letter code: Glutamate synthase 1 [NADH], chloroplastic (2167 aa).

Residues 1–31 form a disordered region; the sequence is MSAAQGMAYKLRTDAAPTGAGRRARRSHSSV. The N-terminal 36 residues, 1–36, are a transit peptide targeting the chloroplast; that stretch reads MSAAQGMAYKLRTDAAPTGAGRRARRSHSSVAAPYR. Residue Cys100 is the Nucleophile of the active site. Residues 100-504 enclose the Glutamine amidotransferase type-2 domain; sequence CGVGFVAELS…PGMMLLVDFE (405 aa). The interval 1022-1042 is disordered; the sequence is KSNTGEGGEQPSRMEPLANGS. Position 1192–1249 (1192–1249) interacts with FMN; sequence LAETHQTLVANGLRGRAILQTDGQLKTGKDVAVACLLGAEEFGFSTAPLITLGCIMMR. Positions 1245, 1251, and 1256 each coordinate [3Fe-4S] cluster. An NAD(+)-binding site is contributed by 1956-1970; sequence GGGDTGTDCIGTSIR.

The protein belongs to the glutamate synthase family. Monomer. [3Fe-4S] cluster serves as cofactor. The cofactor is FAD. It depends on FMN as a cofactor. As to expression, highly expressed in roots.

Its subcellular location is the plastid. The protein localises to the chloroplast. It carries out the reaction 2 L-glutamate + NAD(+) = L-glutamine + 2-oxoglutarate + NADH + H(+). It functions in the pathway amino-acid biosynthesis; L-glutamate biosynthesis via GLT pathway; L-glutamate from 2-oxoglutarate and L-glutamine (NAD(+) route): step 1/1. Its pathway is energy metabolism; nitrogen metabolism. Its function is as follows. Involved in glutamate biosynthesis and plays a major role in the primary ammonium ions assimilation in seedling roots. May be involved in the reutilization of glutamine in developing organs. Plays a role in the development of tillers. In Oryza sativa subsp. japonica (Rice), this protein is Glutamate synthase 1 [NADH], chloroplastic.